The sequence spans 317 residues: SWI/SNF-related matrix-associated actin-dependent regulator of chromatin subfamily E member 1-related (317 aa).

Residues 1-22 (MSHGPKQPGAASAPASGKAPGQ) are compositionally biased toward low complexity. The disordered stretch occupies residues 1–71 (MSHGPKQPGA…RKKILPNGPK (71 aa)). A Glycyl lysine isopeptide (Lys-Gly) (interchain with G-Cter in SUMO2) cross-link involves residue Lys31. The segment covering 31-52 (KQERGEGPRAGEKGSHEEEPVK) has biased composition (basic and acidic residues). The segment covering 53-65 (KRGWPKGKKRKKI) has biased composition (basic residues). Residues 70–138 (PKAPVTGYVR…QYMKELRAYQ (69 aa)) constitute a DNA-binding region (HMG box). Position 160 is a phosphoserine (Ser160). Residues 190 to 257 (EEFLDQNKAR…LQQQLQAVRQ (68 aa)) adopt a coiled-coil conformation.

In terms of assembly, component of a BHC histone deacetylase complex that contains HDAC1, HDAC2, HMG20B/BRAF35, KDM1A, RCOR1/CoREST and PHF21A/BHC80. The BHC complex may also contain ZMYM2, ZNF217, ZMYM3, GSE1 and GTF2I. Interacts with the BRCA2 tumor suppressor protein.

It is found in the nucleus. The protein resides in the chromosome. In terms of biological role, required for correct progression through G2 phase of the cell cycle and entry into mitosis. Required for RCOR1/CoREST mediated repression of neuronal specific gene promoters. The protein is SWI/SNF-related matrix-associated actin-dependent regulator of chromatin subfamily E member 1-related (HMG20B) of Bos taurus (Bovine).